The following is a 95-amino-acid chain: Aspartyl/glutamyl-tRNA(Asn/Gln) amidotransferase subunit C (95 aa).

The protein belongs to the GatC family. In terms of assembly, heterotrimer of A, B and C subunits.

It carries out the reaction L-glutamyl-tRNA(Gln) + L-glutamine + ATP + H2O = L-glutaminyl-tRNA(Gln) + L-glutamate + ADP + phosphate + H(+). It catalyses the reaction L-aspartyl-tRNA(Asn) + L-glutamine + ATP + H2O = L-asparaginyl-tRNA(Asn) + L-glutamate + ADP + phosphate + 2 H(+). In terms of biological role, allows the formation of correctly charged Asn-tRNA(Asn) or Gln-tRNA(Gln) through the transamidation of misacylated Asp-tRNA(Asn) or Glu-tRNA(Gln) in organisms which lack either or both of asparaginyl-tRNA or glutaminyl-tRNA synthetases. The reaction takes place in the presence of glutamine and ATP through an activated phospho-Asp-tRNA(Asn) or phospho-Glu-tRNA(Gln). In Ruthia magnifica subsp. Calyptogena magnifica, this protein is Aspartyl/glutamyl-tRNA(Asn/Gln) amidotransferase subunit C.